Reading from the N-terminus, the 984-residue chain is Ubiquitin conjugation factor E4 ufd-2 (984 aa).

Residues 909–982 (DVPEEFKDPI…QEWICQKRNS (74 aa)) enclose the U-box domain.

It belongs to the ubiquitin conjugation factor E4 family. As to quaternary structure, forms a complex composed of deubiquitinating enzyme atx-3, E4 ubiquitin-protein ligase ufd-2 and cdc-48.1; within the complex interacts with atx-3 and cdc-48.1 (via DDDLYN motif). Forms a complex composed of cdc-48.1, myosin chaperone unc-45, ubiquitin-protein ligases ufd-2 and chn-1; the complex targets myosin chaperone unc-45 for proteasomal degradation; within the complex interacts with cdc-48.1 (via DDDLYN motif), chn-1 and unc-45. Forms a complex composed of unc-45 and myosin heavy chain B unc-54; the complex targets unfolded unc-54 for proteasomal degradation; within the complex interacts with unc-45 (via TPR domain) and unc-54. Interacts with cdc-48.2 (via DDDLYN motif). As to expression, expressed in the germline (at protein level).

It is found in the cytoplasm. Its subcellular location is the nucleus membrane. The protein localises to the nucleus. It localises to the nucleolus. It carries out the reaction S-ubiquitinyl-[E2 ubiquitin-conjugating enzyme]-L-cysteine + [acceptor protein]-L-lysine = [E2 ubiquitin-conjugating enzyme]-L-cysteine + N(6)-ubiquitinyl-[acceptor protein]-L-lysine.. It functions in the pathway protein modification; protein ubiquitination. In terms of biological role, acts as an E4 ubiquitin ligase mediating the assembly of polyubiquitin chains on substrates ubiquitinated by another E3 ubiquitin ligase. The elongation of preexisting ubiquitin chains preferentially targets ubiquitin 'Lys-29' and 'Lys-48' residues. Also functions as an E3 ligase in conjunction with specific E1 and E2 ligases. Probably by regulating protein ubiquitination at DNA damage repair sites, coordinates DNA double-strand-break repair and apoptosis in the germline. Required for germline apoptosis in response to DNA damage downstream of cep-1. Involved in the resolution of DNA-repair sites by promoting the release of rad-51 from DNA damage foci. In association with protein-ligase chn-1, acts as an E3/E4 ligase to poly-ubiquitinate lysine residues in the UCS domain of myosin chaperone unc-45. By targeting myosin chaperone unc-45 for proteasomal degradation, regulates myosin assembly in body wall muscles in association with cdc-48.1 and chn-1. However, in a contrasting study, acts as an E3 ligase, independently of chn-1, to poly-ubiquitinate unc-45 without promoting unc-45 proteasomal degradation. Instead, uses unc-45 as an adapter protein to recruit and poly-ubiquitinate unfolded myosin heavy chain B unc-54. In Caenorhabditis elegans, this protein is Ubiquitin conjugation factor E4 ufd-2.